The sequence spans 382 residues: 2-heptyl-3-hydroxy-4(1H)-quinolone synthase (382 aa).

Belongs to the 3-hydroxybenzoate 6-hydroxylase family.

It catalyses the reaction 2-heptyl-4(1H)-quinolone + NADH + O2 + H(+) = 2-heptyl-3-hydroxy-4(1H)-quinolone + NAD(+) + H2O. Its function is as follows. Involved in the terminal step of the biosynthesis of quinolone which in addition to serve as a potent signal for quorum sensing, chelates iron and promotes the formation of membrane vesicles (MVs). Catalyzes the hydroxylation of 2-heptyl-4-quinolone (C7-HHQ) to yield 2-heptyl-3-hydroxy-4-quinolone (PQS). In Pseudomonas aeruginosa (strain ATCC 15692 / DSM 22644 / CIP 104116 / JCM 14847 / LMG 12228 / 1C / PRS 101 / PAO1), this protein is 2-heptyl-3-hydroxy-4(1H)-quinolone synthase (pqsH).